The chain runs to 193 residues: Ectoine TRAP transporter small permease protein TeaB (193 aa).

Helical transmembrane passes span 33–55, 65–82, 103–125, and 145–167; these read ILAL…RFAL, VNRI…GYAA, RALM…YYSV, and IFII…LFTA.

This sequence belongs to the TRAP transporter small permease family. As to quaternary structure, the complex comprises the extracytoplasmic solute receptor protein TeaA, and the two transmembrane proteins TeaB and TeaC.

The protein resides in the cell inner membrane. Its function is as follows. Part of the tripartite ATP-independent periplasmic (TRAP) transport system TeaABC involved in the uptake of ectoine and hydroxyectoine in response to osmotic upshock. Probably functions as a recovery system for synthesized ectoine that leaks out of the cell. The chain is Ectoine TRAP transporter small permease protein TeaB (teaB) from Halomonas elongata (strain ATCC 33173 / DSM 2581 / NBRC 15536 / NCIMB 2198 / 1H9).